Here is a 405-residue protein sequence, read N- to C-terminus: Acetate kinase (405 aa).

Residue asparagine 7 participates in Mg(2+) binding. Lysine 14 contacts ATP. Substrate is bound at residue arginine 98. The active-site Proton donor/acceptor is the aspartate 155. Residues 214-218 (HLGNG), 289-291 (DLR), and 337-341 (GVGEN) contribute to the ATP site. A Mg(2+)-binding site is contributed by glutamate 390.

The protein belongs to the acetokinase family. In terms of assembly, homodimer. Requires Mg(2+) as cofactor. Mn(2+) is required as a cofactor.

It is found in the cytoplasm. It catalyses the reaction acetate + ATP = acetyl phosphate + ADP. It participates in metabolic intermediate biosynthesis; acetyl-CoA biosynthesis; acetyl-CoA from acetate: step 1/2. In terms of biological role, catalyzes the formation of acetyl phosphate from acetate and ATP. Can also catalyze the reverse reaction. This chain is Acetate kinase, found in Gloeothece citriformis (strain PCC 7424) (Cyanothece sp. (strain PCC 7424)).